The sequence spans 474 residues: tRNA-2-methylthio-N(6)-dimethylallyladenosine synthase (474 aa).

Residues 3 to 120 (QKLHIKTWGC…LPEMINQIRG (118 aa)) form the MTTase N-terminal domain. [4Fe-4S] cluster contacts are provided by C12, C49, C83, C157, C161, and C164. One can recognise a Radical SAM core domain in the interval 143-375 (RAEGPTAFVS…QERINQQAAQ (233 aa)). Residues 378–441 (RRMLGTEQRV…TNSLRGEVVR (64 aa)) enclose the TRAM domain.

The protein belongs to the methylthiotransferase family. MiaB subfamily. As to quaternary structure, monomer. It depends on [4Fe-4S] cluster as a cofactor.

Its subcellular location is the cytoplasm. It catalyses the reaction N(6)-dimethylallyladenosine(37) in tRNA + (sulfur carrier)-SH + AH2 + 2 S-adenosyl-L-methionine = 2-methylsulfanyl-N(6)-dimethylallyladenosine(37) in tRNA + (sulfur carrier)-H + 5'-deoxyadenosine + L-methionine + A + S-adenosyl-L-homocysteine + 2 H(+). Functionally, catalyzes the methylthiolation of N6-(dimethylallyl)adenosine (i(6)A), leading to the formation of 2-methylthio-N6-(dimethylallyl)adenosine (ms(2)i(6)A) at position 37 in tRNAs that read codons beginning with uridine. The protein is tRNA-2-methylthio-N(6)-dimethylallyladenosine synthase of Haemophilus influenzae (strain PittEE).